A 126-amino-acid chain; its full sequence is MSNIPAELKYIASHEWLRLEDDGTITVGITDHAQDLLGDVVFVELPDVGDIIAVDDEISVVESVKAASDVYAPISGEVVAINEALEDDPEIINSDPYGEGWFFRMKPDNIADYEALLTADEYENEL.

A Lipoyl-binding domain is found at 24 to 106 (TITVGITDHA…YGEGWFFRMK (83 aa)). Lys-65 is subject to N6-lipoyllysine.

This sequence belongs to the GcvH family. In terms of assembly, the glycine cleavage system is composed of four proteins: P, T, L and H. (R)-lipoate serves as cofactor.

The glycine cleavage system catalyzes the degradation of glycine. The H protein shuttles the methylamine group of glycine from the P protein to the T protein. This Psychrobacter arcticus (strain DSM 17307 / VKM B-2377 / 273-4) protein is Glycine cleavage system H protein.